Here is a 213-residue protein sequence, read N- to C-terminus: Putative glutathione-dependent formaldehyde-activating enzyme (213 aa).

The CENP-V/GFA domain occupies 19-165 (FPGGTLKCLC…FRELGLETYD (147 aa)). Zn(2+)-binding residues include Cys26, Cys28, Cys47, Cys49, Cys52, Cys94, and Cys97.

This sequence belongs to the Gfa family. Zn(2+) is required as a cofactor.

It carries out the reaction S-(hydroxymethyl)glutathione = glutathione + formaldehyde. It functions in the pathway one-carbon metabolism; formaldehyde degradation; formate from formaldehyde (glutathione route): step 1/3. Catalyzes the condensation of formaldehyde and glutathione to S-hydroxymethylglutathione. In Podospora anserina (strain S / ATCC MYA-4624 / DSM 980 / FGSC 10383) (Pleurage anserina), this protein is Putative glutathione-dependent formaldehyde-activating enzyme.